The following is a 226-amino-acid chain: ATP synthase F(0) complex subunit a (226 aa).

The next 6 helical transmembrane spans lie at 6–26 (FASF…IILF), 68–88 (WSLM…LGLL), 97–117 (QLSM…VMGF), 138–158 (IPML…ALAV), 164–184 (ITAG…LSTI), and 189–209 (ALII…VALI).

It belongs to the ATPase A chain family. Component of the ATP synthase complex composed at least of ATP5F1A/subunit alpha, ATP5F1B/subunit beta, ATP5MC1/subunit c (homooctomer), MT-ATP6/subunit a, MT-ATP8/subunit 8, ATP5ME/subunit e, ATP5MF/subunit f, ATP5MG/subunit g, ATP5MK/subunit k, ATP5MJ/subunit j, ATP5F1C/subunit gamma, ATP5F1D/subunit delta, ATP5F1E/subunit epsilon, ATP5PF/subunit F6, ATP5PB/subunit b, ATP5PD/subunit d, ATP5PO/subunit OSCP. ATP synthase complex consists of a soluble F(1) head domain (subunits alpha(3) and beta(3)) - the catalytic core - and a membrane F(0) domain - the membrane proton channel (subunits c, a, 8, e, f, g, k and j). These two domains are linked by a central stalk (subunits gamma, delta, and epsilon) rotating inside the F1 region and a stationary peripheral stalk (subunits F6, b, d, and OSCP). Interacts with DNAJC30; interaction is direct.

The protein localises to the mitochondrion inner membrane. The catalysed reaction is H(+)(in) = H(+)(out). Its function is as follows. Subunit a, of the mitochondrial membrane ATP synthase complex (F(1)F(0) ATP synthase or Complex V) that produces ATP from ADP in the presence of a proton gradient across the membrane which is generated by electron transport complexes of the respiratory chain. ATP synthase complex consist of a soluble F(1) head domain - the catalytic core - and a membrane F(1) domain - the membrane proton channel. These two domains are linked by a central stalk rotating inside the F(1) region and a stationary peripheral stalk. During catalysis, ATP synthesis in the catalytic domain of F(1) is coupled via a rotary mechanism of the central stalk subunits to proton translocation. With the subunit c (ATP5MC1), forms the proton-conducting channel in the F(0) domain, that contains two crucial half-channels (inlet and outlet) that facilitate proton movement from the mitochondrial intermembrane space (IMS) into the matrix. Protons are taken up via the inlet half-channel and released through the outlet half-channel, following a Grotthuss mechanism. In Pan troglodytes (Chimpanzee), this protein is ATP synthase F(0) complex subunit a.